We begin with the raw amino-acid sequence, 77 residues long: Acyl carrier protein (77 aa).

Residues 2 to 77 (SDVADRVKKI…DAVKFISEAS (76 aa)) enclose the Carrier domain. S37 bears the O-(pantetheine 4'-phosphoryl)serine mark.

Belongs to the acyl carrier protein (ACP) family. Post-translationally, 4'-phosphopantetheine is transferred from CoA to a specific serine of apo-ACP by AcpS. This modification is essential for activity because fatty acids are bound in thioester linkage to the sulfhydryl of the prosthetic group.

The protein resides in the cytoplasm. Its pathway is lipid metabolism; fatty acid biosynthesis. Functionally, carrier of the growing fatty acid chain in fatty acid biosynthesis. The protein is Acyl carrier protein of Ruegeria sp. (strain TM1040) (Silicibacter sp.).